A 221-amino-acid polypeptide reads, in one-letter code: Protein Pisl_1005 (221 aa).

In terms of domain architecture, AMMECR1 spans 8 to 201 (EEGAYLVKLA…EKTPGGEIYE (194 aa)).

The chain is Protein Pisl_1005 from Pyrobaculum islandicum (strain DSM 4184 / JCM 9189 / GEO3).